The sequence spans 256 residues: Myeloblastin (256 aa).

An N-terminal signal peptide occupies residues 1 to 25 (MAHRPPSPALASVLLALLLSGAARA). The propeptide occupies 26-27 (AE). The Peptidase S1 domain maps to 28 to 248 (IVGGHEAQPH…YVDWIRSTLR (221 aa)). Cysteine 56 and cysteine 72 are disulfide-bonded. Active-site charge relay system residues include histidine 71 and aspartate 118. N-linked (GlcNAc...) asparagine glycosylation is found at asparagine 129 and asparagine 174. 3 disulfide bridges follow: cysteine 152-cysteine 209, cysteine 182-cysteine 188, and cysteine 199-cysteine 224. Serine 203 acts as the Charge relay system in catalysis. Positions 249–256 (RVEAKGRP) are excised as a propeptide.

The protein belongs to the peptidase S1 family. Elastase subfamily. In terms of assembly, may form dimers. Interacts with CD177; the interaction tethers PRTN3 to the cell surface; the interaction is direct. Interacts with SERPINB1. Interacts with ADGRG3. In terms of tissue distribution, expressed in polymorphonuclear leukocytes (at protein level). Expressed in neutrophils (at protein level). Expressed in differentiating neutrophils.

It localises to the cytoplasmic granule. Its subcellular location is the secreted. The protein resides in the cell membrane. The protein localises to the membrane raft. It catalyses the reaction Hydrolysis of proteins, including elastin, by preferential cleavage: -Ala-|-Xaa- &gt; -Val-|-Xaa-.. Inhibited by phenylmethanesulfonyl fluoride (PMSF) and diisopropyl fluorophosphate (DFP). Serine protease that degrades elastin, fibronectin, laminin, vitronectin, and collagen types I, III, and IV (in vitro). By cleaving and activating receptor F2RL1/PAR-2, enhances endothelial cell barrier function and thus vascular integrity during neutrophil transendothelial migration. Plays a role in neutrophil transendothelial migration, probably when associated with CD177. Triggers inflammatory processes in neutrophils by interacting with ADGRG3 upstream of F2RL1/PAR2 activation. The sequence is that of Myeloblastin (PRTN3) from Homo sapiens (Human).